Here is a 114-residue protein sequence, read N- to C-terminus: uncharacterized protein (114 aa).

This is an uncharacterized protein from Schizosaccharomyces pombe (strain 972 / ATCC 24843) (Fission yeast).